The sequence spans 873 residues: Polyribonucleotide nucleotidyltransferase (873 aa).

Mg(2+)-binding residues include Asp521 and Asp527. One can recognise a KH domain in the interval 587 to 646; the sequence is PRIITTTVPVDKIGEVIGPKGKMINQIQEDTGAEIAIEDDGTVYISSEGGEAAEKAKQII. Residues 658–730 form the S1 motif domain; sequence GETYKGTVVK…DRGKISLAIP (73 aa). The tract at residues 727–873 is disordered; it reads LAIPGFENQE…VRRDFDPFDD (147 aa). Residues 742–857 show a composition bias toward basic and acidic residues; the sequence is RRSDDRPRRD…EYREGREVRH (116 aa).

The protein belongs to the polyribonucleotide nucleotidyltransferase family. Mg(2+) is required as a cofactor.

It is found in the cytoplasm. The catalysed reaction is RNA(n+1) + phosphate = RNA(n) + a ribonucleoside 5'-diphosphate. Its function is as follows. Involved in mRNA degradation. Catalyzes the phosphorolysis of single-stranded polyribonucleotides processively in the 3'- to 5'-direction. This chain is Polyribonucleotide nucleotidyltransferase, found in Bifidobacterium animalis subsp. lactis (strain AD011).